Consider the following 205-residue polypeptide: Holliday junction branch migration complex subunit RuvA (205 aa).

The domain I stretch occupies residues 1-64; the sequence is MIGKLRGIVD…DEAIRLIGFT (64 aa). The segment at 65 to 143 is domain II; the sequence is TDSEREWFRL…DSMGLSAALE (79 aa). The flexible linker stretch occupies residues 144–152; it reads VGVNGEAVS. Residues 153–205 form a domain III region; sequence SVSAPARDAVSALVNLGYPQAQAMGAVAAAAKRLDDAASTEQLIRHGLKELAR.

Belongs to the RuvA family. In terms of assembly, homotetramer. Forms an RuvA(8)-RuvB(12)-Holliday junction (HJ) complex. HJ DNA is sandwiched between 2 RuvA tetramers; dsDNA enters through RuvA and exits via RuvB. An RuvB hexamer assembles on each DNA strand where it exits the tetramer. Each RuvB hexamer is contacted by two RuvA subunits (via domain III) on 2 adjacent RuvB subunits; this complex drives branch migration. In the full resolvosome a probable DNA-RuvA(4)-RuvB(12)-RuvC(2) complex forms which resolves the HJ.

It localises to the cytoplasm. Its function is as follows. The RuvA-RuvB-RuvC complex processes Holliday junction (HJ) DNA during genetic recombination and DNA repair, while the RuvA-RuvB complex plays an important role in the rescue of blocked DNA replication forks via replication fork reversal (RFR). RuvA specifically binds to HJ cruciform DNA, conferring on it an open structure. The RuvB hexamer acts as an ATP-dependent pump, pulling dsDNA into and through the RuvAB complex. HJ branch migration allows RuvC to scan DNA until it finds its consensus sequence, where it cleaves and resolves the cruciform DNA. This Parvibaculum lavamentivorans (strain DS-1 / DSM 13023 / NCIMB 13966) protein is Holliday junction branch migration complex subunit RuvA.